We begin with the raw amino-acid sequence, 351 residues long: GDP-mannose 4,6-dehydratase (351 aa).

Residues 11–16 (GVTGQD), 66–67 (DM), 88–92 (LAAQS), and Y103 each bind NADP(+). T135 is a catalytic residue. Catalysis depends on nucleophile residues E137 and Y159. 3 residues coordinate NADP(+): K163, H189, and R194.

This sequence belongs to the NAD(P)-dependent epimerase/dehydratase family. GDP-mannose 4,6-dehydratase subfamily. NADP(+) serves as cofactor.

It carries out the reaction GDP-alpha-D-mannose = GDP-4-dehydro-alpha-D-rhamnose + H2O. Its pathway is nucleotide-sugar biosynthesis; GDP-L-fucose biosynthesis via de novo pathway; GDP-L-fucose from GDP-alpha-D-mannose: step 1/2. Functionally, catalyzes the conversion of GDP-D-mannose to GDP-4-dehydro-6-deoxy-D-mannose. This is GDP-mannose 4,6-dehydratase from Sinorhizobium fredii (strain HH103).